We begin with the raw amino-acid sequence, 257 residues long: DNA repair protein RecO (257 aa).

Belongs to the RecO family.

Its function is as follows. Involved in DNA repair and RecF pathway recombination. This Synechococcus sp. (strain CC9605) protein is DNA repair protein RecO.